We begin with the raw amino-acid sequence, 596 residues long: MAKPKSNSHLSWQDYLKTVAPTQILSERGANLVVINLGSANVRVGLAMDEKPFNVPNCIARYITQSGKPTVVDQMLNTEVTTNQHVDRERAYNSAASLLKILFLDESSSSGSASRKMGRIDGYNQASTIKKDSVFTWTDVYEDEKISLASPAETSPDKGDASASEAVPDVTDSKDTSESKRKYRKMIFGEEALKISPKEPYCLYHPIRRGHFNVSPHYSAQRVCEDLTAILDWILLEKLHITHKERFSFHAVIVVPETFDTREIKEMLTIVLGELYFNSAVVHQEGLSAVFGNGLTTACIVNIGAQTSTVVCVEDGVSLPNTEKILPFGGEDICRCLLWIQRHYQKWPQINTDVLAKPIDMLMLNQLKESFCEIRAGELETVATVHSYEEGMPAVPHKTNLTSLNVPPMGLFYPNLLVPEIFPQPPRQWFQDYENMLEDTWNMDFGGGGNMGLPMWDSFAFSPSKPKKEEKIGLAEAITSSILSAGRIDLRRKLFSSIQLIGGAGLTKGLVAAVEERVLHAIPPTEAIDTVQVLPSRTEPQFVTWKGGAILGILDFGREAWIERHQWMVNGVNKGGLKKYKDSYHLQGQAMYFINP.

Residues 148-178 (LASPAETSPDKGDASASEAVPDVTDSKDTSE) form a disordered region.

This sequence belongs to the actin family. ARP8 subfamily.

This chain is Actin-related protein 9 (ARP9), found in Arabidopsis thaliana (Mouse-ear cress).